A 221-amino-acid polypeptide reads, in one-letter code: Protein myomaker (221 aa).

The Extracellular segment spans residues 1–3 (MGT). A helical transmembrane segment spans residues 4–24 (LVAKLLLPTLSSLAFLPTVSI). Over 25 to 34 (AAKRRFHMEA) the chain is Cytoplasmic. Residues 35–55 (MVYLFTLFFVALHHACNGPGL) form a helical membrane-spanning segment. Over 56 to 64 (SVLCFMRHD) the chain is Extracellular. Residues 65–85 (ILEYFSVYGTALSMWVSLMAL) traverse the membrane as a helical segment. The Cytoplasmic portion of the chain corresponds to 86 to 92 (ADFDEPK). A helical transmembrane segment spans residues 93-110 (RSTFVMFGVLTIAVRIYH). Residues 111 to 113 (DRW) lie on the Extracellular side of the membrane. A helical transmembrane segment spans residues 114-134 (GYGVYSGPIGTAILIIAAKWL). Over 135-153 (QKMKEKKGLYPDKSVYTQQ) the chain is Cytoplasmic. A helical transmembrane segment spans residues 154 to 174 (IGPGLCFGALALMLRFFFEDW). Residue D175 is a topological domain, extracellular. Residues 176–196 (YTYVHSFYHCALAMSFVLLLP) form a helical membrane-spanning segment. The Cytoplasmic segment spans residues 197 to 221 (KVNKKAGSPGTPAKLDCSTLCCACV). S-palmitoyl cysteine attachment occurs at residues C217 and C218.

Belongs to the TMEM8 family. In terms of assembly, interacts with MYMX. Palmitoylated at the C-terminus; palmitoylation promotes localization to the Golgi apparatus.

The protein localises to the cell membrane. Its subcellular location is the golgi apparatus membrane. Myoblast-specific protein that mediates myoblast fusion, an essential step for the formation of multi-nucleated muscle fibers. Actively participates in the membrane fusion reaction by mediating the mixing of cell membrane lipids (hemifusion) upstream of MYMX. Acts independently of MYMX. Involved in skeletal muscle regeneration in response to injury by mediating the fusion of satellite cells, a population of muscle stem cells, with injured myofibers. Also involved in skeletal muscle hypertrophy, probably by mediating the fusion of satellite cells with myofibers. The sequence is that of Protein myomaker from Homo sapiens (Human).